A 238-amino-acid chain; its full sequence is tRNA (guanine-N(7)-)-methyltransferase (238 aa).

Residues E68, E93, D120, and D143 each contribute to the S-adenosyl-L-methionine site. D143 is a catalytic residue. Residues K147, D179, and 216 to 219 (TKFE) contribute to the substrate site.

Belongs to the class I-like SAM-binding methyltransferase superfamily. TrmB family.

It carries out the reaction guanosine(46) in tRNA + S-adenosyl-L-methionine = N(7)-methylguanosine(46) in tRNA + S-adenosyl-L-homocysteine. It functions in the pathway tRNA modification; N(7)-methylguanine-tRNA biosynthesis. In terms of biological role, catalyzes the formation of N(7)-methylguanine at position 46 (m7G46) in tRNA. In Shewanella baltica (strain OS223), this protein is tRNA (guanine-N(7)-)-methyltransferase.